The sequence spans 189 residues: Putative manganese efflux pump MntP (189 aa).

A run of 6 helical transmembrane segments spans residues 3–23 (IVST…AAVS), 41–61 (MIFG…GRVA), 62–82 (ADYV…FLGI), 103–123 (SFIL…SVGV), 132–152 (IVPV…AGVM), and 167–187 (IIGG…HLYG).

Belongs to the MntP (TC 9.B.29) family.

The protein localises to the cell inner membrane. Probably functions as a manganese efflux pump. The protein is Putative manganese efflux pump MntP of Methylobacillus flagellatus (strain ATCC 51484 / DSM 6875 / VKM B-1610 / KT).